The sequence spans 142 residues: Large ribosomal subunit protein uL13 (142 aa).

The protein belongs to the universal ribosomal protein uL13 family. In terms of assembly, part of the 50S ribosomal subunit.

This protein is one of the early assembly proteins of the 50S ribosomal subunit, although it is not seen to bind rRNA by itself. It is important during the early stages of 50S assembly. In Acidovorax sp. (strain JS42), this protein is Large ribosomal subunit protein uL13.